The chain runs to 122 residues: Large ribosomal subunit protein uL18 (122 aa).

It belongs to the universal ribosomal protein uL18 family. As to quaternary structure, part of the 50S ribosomal subunit; part of the 5S rRNA/L5/L18/L25 subcomplex. Contacts the 5S and 23S rRNAs.

Its function is as follows. This is one of the proteins that bind and probably mediate the attachment of the 5S RNA into the large ribosomal subunit, where it forms part of the central protuberance. This is Large ribosomal subunit protein uL18 from Prochlorococcus marinus (strain MIT 9515).